Reading from the N-terminus, the 143-residue chain is Large ribosomal subunit protein uL11 (143 aa).

Belongs to the universal ribosomal protein uL11 family. In terms of assembly, part of the ribosomal stalk of the 50S ribosomal subunit. Interacts with L10 and the large rRNA to form the base of the stalk. L10 forms an elongated spine to which L12 dimers bind in a sequential fashion forming a multimeric L10(L12)X complex. One or more lysine residues are methylated.

Functionally, forms part of the ribosomal stalk which helps the ribosome interact with GTP-bound translation factors. This chain is Large ribosomal subunit protein uL11, found in Bordetella pertussis (strain Tohama I / ATCC BAA-589 / NCTC 13251).